Consider the following 354-residue polypeptide: Nicotinate-nucleotide--dimethylbenzimidazole phosphoribosyltransferase (354 aa).

E319 acts as the Proton acceptor in catalysis.

The protein belongs to the CobT family.

The catalysed reaction is 5,6-dimethylbenzimidazole + nicotinate beta-D-ribonucleotide = alpha-ribazole 5'-phosphate + nicotinate + H(+). It participates in nucleoside biosynthesis; alpha-ribazole biosynthesis; alpha-ribazole from 5,6-dimethylbenzimidazole: step 1/2. Functionally, catalyzes the synthesis of alpha-ribazole-5'-phosphate from nicotinate mononucleotide (NAMN) and 5,6-dimethylbenzimidazole (DMB). The protein is Nicotinate-nucleotide--dimethylbenzimidazole phosphoribosyltransferase of Pelodictyon phaeoclathratiforme (strain DSM 5477 / BU-1).